The following is a 509-amino-acid chain: MKEYQVYLERARSRQQDFLYPLIFREYIYGLAYSQNFKRSSFVENLGYDSKYSLLIVKRLISRMYQQNHLIISANDSNKNPFWGYNKNFNSQIISEGFAIVVEIPFFLQSGSSLKESEIIKSYKNLRSIHSVFPFLEDKFTYLNYVSDIRIPYPIHLEILVQILRYWVKDAPFFHLLRLFVYNFCNWNSFITTKKSIYTFSKSNPRLFLFLYNFYVWEYESIFLFLRNKSSHLRLKSFSVFFERIFFYAKREHLVEVFAKDFPYTLKFFKDPLIHYVRYQGKSILASRNAPILMNKWKHYFLHLWQCFFDVWSQPGTIKINQLSQHSFQLLGYFSNVRLNRSVVRSHMLQNTFLIEIVRKKLDIIVPIIPLIRSLAKGKFCNVLGHPISKPVWADSSDLDIIDRFLRICRNLSHYYNGSSKKKSLYQIKYILRLSCIKTLACKHKSTVRAFLKRSGSEELLEEFFTEEEEILSFIFPRDSSTLQRLHRNRINRIWYLDILFSNDLVNHE.

The protein belongs to the intron maturase 2 family. MatK subfamily.

The protein localises to the plastid. Its subcellular location is the chloroplast. In terms of biological role, usually encoded in the trnK tRNA gene intron. Probably assists in splicing its own and other chloroplast group II introns. In Cicer arietinum (Chickpea), this protein is Maturase K.